The sequence spans 235 residues: Peroxisomal membrane protein 11C (235 aa).

Residues 1–91 (MSTLETTRAE…LPLVLLGKSK (91 aa)) lie on the Cytoplasmic side of the membrane. A helical membrane pass occupies residues 92 to 108 (NALLSTFLFLDQIVWLG). The Lumenal segment spans residues 109 to 206 (RTGIYKDKER…LLQLAPKKVT (98 aa)). The helical transmembrane segment at 207-226 (PRVTGAFGFASSLISCYQLL) threads the bilayer. Residues 227–235 (PSHPKSKMV) are Cytoplasmic-facing.

The protein belongs to the peroxin-11 family. Homooligomer. Interacts with ARC5 and FIS1B on peroxisomes. Expressed in roots and developing siliques.

Its subcellular location is the peroxisome membrane. Functionally, involved in peroxisomal proliferation. Promotes peroxisomal duplication, aggregation or elongation without fission. The chain is Peroxisomal membrane protein 11C (PEX11C) from Arabidopsis thaliana (Mouse-ear cress).